The sequence spans 1704 residues: MKAVVLALTLAFVAGQNFAPEFAAGKTYVYKYEALILGGLPEEGLARAGLKISTKLLLSAADQNTYMLKLVEPELSEYSGIWPKDPAVPATKLTAALAPQLAIPIKFEYTNGVVGKVFAPEEVSTLVLNIYRGILNILQLNIKKTHKVYDLQEVGTQGVCKTLYSISEDARIENILLTKTRDLSNCQERLNKDIGLAYTEKCDKCQEETKNLRGTTTLSYVLKPVADAVMILKAYVNELIQFSPFSEANGAAQMRTKQSLEFLEIEKEPIPSVKAEYRHRGSLKYEFSDELLQTPLQLIKISDAPAQVAEVLKHLATYNIEDVHENAPLKFLELVQLLRIARYEDLEMYWNQYKKMSPHRHWFLDTIPATGTFAGLRFIKEKFMAEEITIAEAAQAFITAVHMVTADPEVIKLFESLVDSDKVVENPLLREVVFLGYGTMVNKYCNKTVDCPVELIKPIQQRLSDAIAKNEEENIILYIKVLGNAGHPSSFKSLTKIMPIHGTAAVSLPMTIHVEAIMALRNIAKKESRMVQELALQLYMDKALHPELRMLSCIVLFETSPSMGLVTTVANSVKTEENLQVASFTYSHMKSLSRSPATIHPDVAAACSAAMKILGTKLDRLSLRYSKAVHVDLYNSSLAVGAAATAFYINDAATFMPKSFVAKTKGFIAGSTAEVLEIGANIEGLQELILKNPALSESTDRITKMKRVIKALSEWRSLPTSKPLASVYVKFFGQEIGFANIDKPMIDKAVKFGKELPIQEYGREALKALLLSGINFHYAKPVLAAEMRRILPTVAGIPMELSLYSAAVAAASVEIKPNTSPRLSADFDVKTLLETDVELKAEIRPMVAMDTYAVMGLNTDIFQAALVARAKLHSVVPAKIAARLNIKEGDFKLEALPVDVPENITSMNVTTFAVARNIEEPLVERITPLLPTKVLVPIPIRRHTSKLDPTRNSMLDSSELLPMEEEDVEPIPEYKFRRFAKKYCAKHIGVGLKACFKFASQNGASIQDIVLYKLAGSHNFSFSVTPIEGEVVERLEMEVKVGAKAAEKLVKRINLSEDEETEEGGPVLVKLNKILSSRRNSSSSSSSSSSSSSESRSSRSSSSSSSSSRSSRKIDLAARTNSSSSSSSRRSRSSSSSSSSSSSSSSSSSSSSRRSSSSSSSSSSSSSRSSRRVNSTRSSSSSSRTSSASSLASFFSDSSSSSSSSDRRSKEVMEKFQRLHKKMVASGSSASSVEAIYKEKKYLGEEEAVVAVILRAVKADKRMVGYQLGFYLDKPNARVQIIVANISSDSNWRICADAVVLSKHKVTTKISWGEQCRKYSTNVTGETGIVSSSPAARLRVSWERLPSTLKRYGKMVNKYVPVKILSDLIHTKRENSTRNISVIAVATSEKTIDIITKTPMSSVYNVTMHLPMCIPIDEIKGLSPFDEVIDKIHFMVSKAAAAECSFVEDTLYTFNNRSYKNKMPSSCYQVAAQDCTDELKFMVLLRKDSSEQHHINVKISEIDIDMFPKDDNVTVKVNEMEIPPPACLTATQQLPLKIKTKRRGLAVYAPSHGLQEVYFDRKTWRIKVADWMKGKTCGLCGKADGEIRQEYHTPNGRVAKNSISFAHSWILPAESCRDASECRLKLESVQLEKQLTIHGEDSTCFSVEPVPRCLPGCLPVKTTPVTVGFSCLASDPQTSVYDRSVDLRQTTQAHLACSCNTKCS.

The first 14 residues, 1 to 14 (MKAVVLALTLAFVA), serve as a signal peptide directing secretion. The Vitellogenin domain occupies 22–660 (FAAGKTYVYK…DAATFMPKSF (639 aa)). 16 N-linked (GlcNAc...) asparagine glycosylation sites follow: N446, N635, N903, N908, N1019, N1054, N1080, N1121, N1174, N1285, N1322, N1375, N1379, N1405, N1456, and N1512. Positions 1078 to 1109 (RRNSSSSSSSSSSSSSESRSSRSSSSSSSSSR) are enriched in low complexity. Positions 1078–1213 (RRNSSSSSSS…SSDRRSKEVM (136 aa)) are disordered. Positions 1122–1204 (SSSSSSSRRS…FSDSSSSSSS (83 aa)) are enriched in low complexity. Residues 1442-1617 (AECSFVEDTL…SWILPAESCR (176 aa)) form the VWFD domain. 2 disulfide bridges follow: C1444–C1580 and C1467–C1616.

Phosvitin, an egg yolk storage protein, is one of the most highly phosphorylated (10%) proteins in nature. Post-translationally, the N-terminal of the blood vitellogenin is blocked. In terms of tissue distribution, produced by the liver, secreted into the blood and then sequestered by receptor mediated endocytosis into growing oocytes, where it is generally cleaved, giving rise to the respective yolk components composed of complex suite of small cleavage products.

Its function is as follows. Precursor of the major egg-yolk proteins that are sources of nutrients during early development of oviparous organisms. This Fundulus heteroclitus (Killifish) protein is Vitellogenin-1 (vtg1).